The following is a 50-amino-acid chain: U2-ctenitoxin-Pk1a (50 aa).

5 disulfides stabilise this stretch: Cys1–Cys15, Cys8–Cys21, Cys12–Cys47, Cys14–Cys31, and Cys23–Cys29.

As to expression, expressed by the venom gland.

The protein resides in the secreted. Functionally, insecticidal neurotoxin that reversibly inhibits the N-methyl-D-aspartate (NMDA)-subtype of ionotropic glutamate receptor (GRIN) and inhibits inactivation of insect sodium channels (Nav). In vivo, is highly toxic to insects. This chain is U2-ctenitoxin-Pk1a, found in Phoneutria keyserlingi (Brazilian wandering spider).